Here is a 171-residue protein sequence, read N- to C-terminus: Peptide deformylase 1 (171 aa).

The Fe cation site is built by C99 and H141. E142 is an active-site residue.

This sequence belongs to the polypeptide deformylase family. It depends on Fe(2+) as a cofactor.

It catalyses the reaction N-terminal N-formyl-L-methionyl-[peptide] + H2O = N-terminal L-methionyl-[peptide] + formate. Removes the formyl group from the N-terminal Met of newly synthesized proteins. Requires at least a dipeptide for an efficient rate of reaction. N-terminal L-methionine is a prerequisite for activity but the enzyme has broad specificity at other positions. This Xanthomonas axonopodis pv. citri (strain 306) protein is Peptide deformylase 1.